The primary structure comprises 1210 residues: MDKELPWLADNAQLELKYKKGKTPLSHRRWPGEPVSVITGSLIQTLGDELLQKAEKKKNIVWRYENFSLEWQSAITQAINLIGEHKPSIPARTMAALACIAQNDSQQLLDEIVQQEGLEYATEVVIARQFIARCYESDPLVVTLQYQDEDYGYGYRSETYNEFDLRLRKHLSLAEESCWQRCADKLIAALPGINKVRRPFIALILPEKPEIANELVGLECPRTHFHSKEWLKVVANDPTAVRKLEHYWSQDIFSDREASYMSHENHFGYAACAALLREQGLAAIPRLAMYAHKEDCGSLLVQINHPQVIRTLLLVADKNKPSLQRVAKYHKNFPHATLAALAELLALTEPPARPGYPIIEDKKLPAQQKARDEYWRTLLQTLMASQPQLAAEVMPWLSTQPQSVLKSYLSAPPKPVIDGTDNSNLPEILVSPPWRSKKKMTAPRLDLAPLELTPQVYWQPGEQERLAATEPARYFSTESLAQRMEQKSGRVVLQELGFGDDVWLFLNYILPGKLDAARNSLFVQWHYYQGRVEEILNGWNSPEAQLAEQALRSGHIEALINIWENDNYSHYRPEKSVWNLYLLAQLPREMALTFWLRINEKKHLFAGEDYFLSILGLDALPGLLLAFSHRPKETFPLILNFGATELALPVAHVWRRFAAQRDLARQWILQWPEHTASALIPLVFTKPSDNSEAALLALRLLYEQGHGELLQTVANRWQRTDVWSALEQLLKQGPMDIYPARIPKAPDFWHPQMWSRPRLITNNQTVTNDALEIIGEMLRFTQGGRFYSGLEQLKTFCQPQTLAAFAWDLFTAWQQAGAPAKDNWAFLALSLFGDESTARDLTTQILAWPQEGKSARAVSGLNILTLMNNDMALIQLHHISQRAKSRPLRDNAAEFLQVVAENRGLSQEELADRLVPTLGLDDPQALSFDFGPRQFTVRFDENLNPVIFDQQNVRQKSVPRLRADDDQLKAPEALARLKGLKKDATQVSKNLLPRLETALRTTRRWSLADFHSLFVNHPFTRLVTQRLIWGVYPANEPRCLLKAFRVAAEGEFCNAQDEPIDLPADALIGIAHPLEMTAEMRSEFAQLFADYEIMPPFRQLSRRTVLLTPDESTSNSLTRWEGKSATVGQLMGMRYKGWESGYEDAFVYNLGEYRLVLKFSPGFNHYNVDSKALMSFRSLRVYRDNKSVTFAELDVFDLSEALSAPDVIFH.

The protein to E.coli molybdate metabolism regulator (MolR).

This is an uncharacterized protein from Escherichia coli (strain K12).